The sequence spans 701 residues: DNA-directed RNA polymerase subunit beta' (701 aa).

Residues Cys-76, Cys-78, Cys-94, and Cys-97 each coordinate Zn(2+). Mg(2+)-binding residues include Asp-511, Asp-513, and Asp-515.

The protein belongs to the RNA polymerase beta' chain family. RpoC1 subfamily. In plastids the minimal PEP RNA polymerase catalytic core is composed of four subunits: alpha, beta, beta', and beta''. When a (nuclear-encoded) sigma factor is associated with the core the holoenzyme is formed, which can initiate transcription. It depends on Mg(2+) as a cofactor. The cofactor is Zn(2+).

Its subcellular location is the plastid. The protein localises to the chloroplast. The enzyme catalyses RNA(n) + a ribonucleoside 5'-triphosphate = RNA(n+1) + diphosphate. Its function is as follows. DNA-dependent RNA polymerase catalyzes the transcription of DNA into RNA using the four ribonucleoside triphosphates as substrates. This is DNA-directed RNA polymerase subunit beta' from Pelargonium hortorum (Common geranium).